The sequence spans 1415 residues: DNA-directed RNA polymerase subunit beta' (1415 aa).

Zn(2+)-binding residues include C71, C73, C86, and C89. Positions 461, 463, and 465 each coordinate Mg(2+). Positions 815, 889, 896, and 899 each coordinate Zn(2+).

This sequence belongs to the RNA polymerase beta' chain family. In terms of assembly, the RNAP catalytic core consists of 2 alpha, 1 beta, 1 beta' and 1 omega subunit. When a sigma factor is associated with the core the holoenzyme is formed, which can initiate transcription. Mg(2+) is required as a cofactor. Zn(2+) serves as cofactor.

The catalysed reaction is RNA(n) + a ribonucleoside 5'-triphosphate = RNA(n+1) + diphosphate. DNA-dependent RNA polymerase catalyzes the transcription of DNA into RNA using the four ribonucleoside triphosphates as substrates. In Haemophilus influenzae (strain ATCC 51907 / DSM 11121 / KW20 / Rd), this protein is DNA-directed RNA polymerase subunit beta'.